The sequence spans 292 residues: Syntenin-2 (292 aa).

PDZ domains lie at glutamate 108 to arginine 187 and threonine 192 to valine 267.

In terms of assembly, monomer and homodimer. Interacts with SDCBP. Interacts with TM4SF1.

The protein localises to the cytoplasm. Its subcellular location is the nucleus. The protein resides in the nucleolus. It is found in the nucleoplasm. It localises to the cell membrane. The protein localises to the nucleus speckle. Binds phosphatidylinositol 4,5-bisphosphate (PIP2). May play a role in the organization of nuclear PIP2, cell division and cell survival. The sequence is that of Syntenin-2 (Sdcbp2) from Mus musculus (Mouse).